A 3305-amino-acid chain; its full sequence is Apolipophorins (3305 aa).

An N-terminal signal peptide occupies residues 1–23 (MGKSNRLLSVLFVISVLWKAAYG). Residues 39-640 (FAAGQKYNYG…SQTSFLPRSV (602 aa)) enclose the Vitellogenin domain. Residues Asn643 and Asn2769 are each glycosylated (N-linked (GlcNAc...) asparagine). A VWFD domain is found at 2733-2899 (LRAVVVNGQH…NSYRLSRSCP (167 aa)). Cys2757 and Cys2898 are oxidised to a cystine.

Post-translationally, cleaved into 2 chains by furin protease. However, prevention of cleavage does not impair its function. In terms of processing, N-glycosylated.

The protein resides in the secreted. Constitutes the major component of lipophorin, which mediates transport for various types of lipids in hemolymph. Acts by forming lipoprotein particles that bind lipoproteins and lipids. May be required for morphogens wingless (wg) and hedgehog (hh) function, possibly by acting as vehicles for the movement of wg and hh. The polypeptide is Apolipophorins (Manduca sexta (Tobacco hawkmoth)).